The chain runs to 588 residues: Protein decapentaplegic (588 aa).

Positions 1 to 23 (MRAWLLLLAVLATFQTIVRVAST) are cleaved as a signal peptide. Positions 24 to 456 (EDISQRFIAA…DGRHKARSIR (433 aa)) are excised as a propeptide. Residues 74-169 (FSEPASFSDS…STESHQSSSI (96 aa)) form a disordered region. Residues 96–119 (SKSDANRQFNEVHKPRTDQLENSK) show a composition bias toward basic and acidic residues. The N-linked (GlcNAc...) asparagine glycan is linked to N120. Residues 140-153 (RSHHKKSHHHRSHQ) show a composition bias toward basic residues. The span at 156-169 (QASASTESHQSSSI) shows a compositional bias: low complexity. N342 and N377 each carry an N-linked (GlcNAc...) asparagine glycan. Positions 454–484 (SIRDVSGGEGGGKGGRNKRQPRRPTRRKNHD) are disordered. Positions 468–481 (GRNKRQPRRPTRRK) are enriched in basic residues. 3 disulfides stabilise this stretch: C487–C553, C516–C585, and C520–C587. A glycan (N-linked (GlcNAc...) asparagine) is linked at N529.

Belongs to the TGF-beta family. As to quaternary structure, heterodimers of scw/dpp are the active subunit, dpp/dpp homodimers elicit a basal response and scw/scw homodimers alone are ineffective in specifying a dorsal pattern. Component of a complex composed of dpp, sog and tsg. Interacts with nord and gbb; the interaction interferes with dpp secretion. As to expression, expressed in the dorsal region of the embryo, and becomes enriched in a dorsal midline stripe just prior to gastrulation. Expressed in midgut mesoderm and in two overlapping regions of the embryonic large intestine. Expressed in a long-range concentration gradient in the wing imaginal disk.

The protein localises to the secreted. Its function is as follows. Required during oogenesis for eggshell patterning and dorsal/ventral patterning of the embryo. Acts as a morphogen during embryogenesis to pattern the dorsal/ventral axis, specifying dorsal ectoderm and amnioserosa cell fate within the dorsal half of the embryo; this activity is antagonized by binding to sog and tsg. Induces the formation of visceral mesoderm and the heart in early embryos. Required later in embryogenesis for dorsal closure and patterning of the hindgut. Also functions postembryonically as a long-range morphogen during imaginal disk development; is responsible for the progression of the morphogenetic furrow during eye development. Patterns the wing imaginal disk along its anterior/posterior axis and has a role in positioning pro-veins. Also required to subdivide the wing disk along the proximal/distal axis into body wall (notum) and wing. Ensures the correct architecture of wing epithelial cells. Has multiple roles in the developing tracheal system, controlling directed tracheal cell migration during embryogenesis and later specifying the fate of fusion cells in the tracheal branches. Required for viability of larvae. Essential for the maintenance and division of germline stem cells in the ovary. Signals via the type I receptor tkv, the type II receptor punt, and in some tissues via the type I receptor sax, in a signaling cascade that leads to activation and repression of target genes. The sequence is that of Protein decapentaplegic (dpp) from Drosophila melanogaster (Fruit fly).